The sequence spans 334 residues: NADH dehydrogenase (ubiquinone) complex I, assembly factor 6 homolog (334 aa).

A mitochondrion-targeting transit peptide spans 1-11 (MRRLVRNWNCR).

Belongs to the NDUFAF6 family. Associates with mitochondrial complex I assembly intermediates during its biogenesis. Forms a complex including sicily, ND-42 and Hsp83; the complex is necessary to chaperone ND-42 in the cytoplasm before mitochondrial import; the interaction between sicily and ND-42 is direct and occurs preferably between the unprocessed forms in the cytoplasm; the interaction with Hsp83 is direct. Interacts with ND-30; interaction is stronger between the unprocessed forms in the cytoplasm. In terms of tissue distribution, expressed in the ventral nerve cord, larval brain, motor neuron axons, imaginal disks, and muscles (at protein level).

The protein resides in the mitochondrion inner membrane. It is found in the cytoplasm. Its subcellular location is the cytosol. Functionally, involved in the assembly of mitochondrial NADH:ubiquinone oxidoreductase complex (Complex I) at early stages. Interacts with cytosolic Hsp90 to chaperone the Complex I subunit ND-42 in the cytoplasm. The chain is NADH dehydrogenase (ubiquinone) complex I, assembly factor 6 homolog from Drosophila melanogaster (Fruit fly).